We begin with the raw amino-acid sequence, 414 residues long: Probable solanesyl-diphosphate synthase 3, chloroplastic (414 aa).

The segment covering 1–23 has biased composition (low complexity); that stretch reads MAAPSSLASSSHLSRRATAAASP. Residues 1 to 36 are disordered; the sequence is MAAPSSLASSSHLSRRATAAASPSIPPPSPPPPPQR. The N-terminal 72 residues, 1–72, are a transit peptide targeting the chloroplast; that stretch reads MAAPSSLASS…KPGVAAVDVP (72 aa). The span at 24-35 shows a compositional bias: pro residues; that stretch reads SIPPPSPPPPPQ. Positions 134, 137, and 172 each coordinate isopentenyl diphosphate. Residues aspartate 179 and aspartate 183 each contribute to the Mg(2+) site. An an all-trans-polyprenyl diphosphate-binding site is contributed by arginine 188. Residue arginine 189 participates in isopentenyl diphosphate binding. An all-trans-polyprenyl diphosphate is bound by residues lysine 265, threonine 266, glutamine 303, and lysine 320.

This sequence belongs to the FPP/GGPP synthase family. Homodimer. Mg(2+) is required as a cofactor.

The protein localises to the plastid. Its subcellular location is the chloroplast. The enzyme catalyses 7 isopentenyl diphosphate + (2E)-geranyl diphosphate = all-trans-nonaprenyl diphosphate + 7 diphosphate. Its function is as follows. Involved in providing solanesyl diphosphate for plastoquinone-9 (PQ-9) formation. The sequence is that of Probable solanesyl-diphosphate synthase 3, chloroplastic from Oryza sativa subsp. japonica (Rice).